The sequence spans 932 residues: MTEFLPFVARHIGPRHEDERAMLAALGLPSMETLITQAVPASIRLNRALNLPAALSEADALAELGTIMGRNVVKKSFIGAGYHGVHTPPVIQRNLFENPAWYTAYTPYQSEISQGRLELLFHFQTLVAELTGLPVACASLLDEATAVAEAIGVACRHHRDKRSRILLAGELHPQTVDVVNTRAEPLGWEIATGSDVDDNTAAIVVPWPDTRGVYGDFAKVIADAKAKGALVIAVADPLALTIMEAPARWGADMAVGSMQRYGVPMGFGGPHAAYLAVSEALTRIIPGRIVGQSVDAHGRAAYRLALQTREQHIRRDKATSNICTAQALLANMAAAFAIWHGPAGLQAIATRVAALAARFAAALKAAGVEIAGESLFDTVTAKVPGKAAAIAAEADKGGRLIRIIDADTVGVTFDETSTEEDLTALASLFGAKLVGGDTVLVPGKERGEGFLTQEVFHSHRSETEMMRFLRRLADKDLALDRAMIPLGSCTMKLNAAAEMMPVSWNTVANLHPFAPAEQVQGYAKMTSDLEAWLCEITGFAGVSLQPNAGSQGEYAGLMAIRHYHQARGQGHRNICLIPSSAHGTNPASASMAGMSVVVVNCRPDGDIDIDDLKAKAEKHRDNLAAFMITYPSTYGVFEEGIKAFCEIVHDNGGQVYFDGANLNALVGLARPADIGADVCHMNLHKTFCIPHGGGGPGVGPIGVAKHLVPYLPGHVEAGSEHAVAAAQFGSASILVITWMYIRMMGGAGLKKATEAAILNANYIAHRLKGVYPILYTGAHDRVAHECIVDTRVLKDSAGITVEDVAKRLIDYGFHAPTMSWPVAGTLMIEPTESEPKLEIDRLCDAMIAIAGEAKKVADGVWPADDNPLANAPHTASDTLATEWKHPYTREEAVFPGGAFDPTAKYWPPVSRVDNVGGDRNLICSCPPVAAYG.

The residue at position 685 (Lys685) is an N6-(pyridoxal phosphate)lysine.

This sequence belongs to the GcvP family. In terms of assembly, the glycine cleavage system is composed of four proteins: P, T, L and H. The cofactor is pyridoxal 5'-phosphate.

The catalysed reaction is N(6)-[(R)-lipoyl]-L-lysyl-[glycine-cleavage complex H protein] + glycine + H(+) = N(6)-[(R)-S(8)-aminomethyldihydrolipoyl]-L-lysyl-[glycine-cleavage complex H protein] + CO2. The glycine cleavage system catalyzes the degradation of glycine. The P protein binds the alpha-amino group of glycine through its pyridoxal phosphate cofactor; CO(2) is released and the remaining methylamine moiety is then transferred to the lipoamide cofactor of the H protein. This Brucella melitensis biotype 1 (strain ATCC 23456 / CCUG 17765 / NCTC 10094 / 16M) protein is Glycine dehydrogenase (decarboxylating).